A 402-amino-acid polypeptide reads, in one-letter code: NADH-quinone oxidoreductase subunit D (402 aa).

This sequence belongs to the complex I 49 kDa subunit family. NDH-1 is composed of 14 different subunits. Subunits NuoB, C, D, E, F, and G constitute the peripheral sector of the complex.

It localises to the cell inner membrane. The enzyme catalyses a quinone + NADH + 5 H(+)(in) = a quinol + NAD(+) + 4 H(+)(out). In terms of biological role, NDH-1 shuttles electrons from NADH, via FMN and iron-sulfur (Fe-S) centers, to quinones in the respiratory chain. The immediate electron acceptor for the enzyme in this species is believed to be ubiquinone. Couples the redox reaction to proton translocation (for every two electrons transferred, four hydrogen ions are translocated across the cytoplasmic membrane), and thus conserves the redox energy in a proton gradient. The polypeptide is NADH-quinone oxidoreductase subunit D (Nitrobacter winogradskyi (strain ATCC 25391 / DSM 10237 / CIP 104748 / NCIMB 11846 / Nb-255)).